The chain runs to 344 residues: Sulfate/thiosulfate import ATP-binding protein CysA (344 aa).

Residues 3 to 233 (ILIDNVSKNF…PESAFVMSFL (231 aa)) form the ABC transporter domain. 35–42 (GPSGCGKS) serves as a coordination point for ATP.

It belongs to the ABC transporter superfamily. Sulfate/tungstate importer (TC 3.A.1.6) family. As to quaternary structure, the complex is composed of two ATP-binding proteins (CysA), two transmembrane proteins (CysT and CysW) and a solute-binding protein (CysP).

It is found in the cell inner membrane. It catalyses the reaction sulfate(out) + ATP + H2O = sulfate(in) + ADP + phosphate + H(+). It carries out the reaction thiosulfate(out) + ATP + H2O = thiosulfate(in) + ADP + phosphate + H(+). Part of the ABC transporter complex CysAWTP involved in sulfate/thiosulfate import. Responsible for energy coupling to the transport system. The sequence is that of Sulfate/thiosulfate import ATP-binding protein CysA from Gloeobacter violaceus (strain ATCC 29082 / PCC 7421).